Here is a 243-residue protein sequence, read N- to C-terminus: MNLYLDIGNTNLKFGYEIENQFHFYTLPTLENYTCDMLSKNLESFIKKQKFNYLIVSSVVPSLNLVIKDFASIHLKSKVMFIDKIKKEILNLNGREHSSIGSDIIANALYVSSRYEDAIVISLGTATVIFHVVSKRLEGAIIAPGVKNSYLSLIQSAKKLSEVILKLPRKNLGGNTQEAISLGILKGNFHLINGFINELDPKGKSKILITGGNYGMLKDVLKDYEYVDNMVILGLKDYYEIFK.

6-13 provides a ligand contact to ATP; that stretch reads DIGNTNLK. 101–104 is a substrate binding site; sequence GSDI. Asp-103 functions as the Proton acceptor in the catalytic mechanism. Position 125 (Thr-125) interacts with ATP. Thr-176 lines the substrate pocket.

It belongs to the type III pantothenate kinase family. In terms of assembly, homodimer. It depends on NH4(+) as a cofactor. K(+) serves as cofactor.

The protein localises to the cytoplasm. It catalyses the reaction (R)-pantothenate + ATP = (R)-4'-phosphopantothenate + ADP + H(+). The protein operates within cofactor biosynthesis; coenzyme A biosynthesis; CoA from (R)-pantothenate: step 1/5. Its function is as follows. Catalyzes the phosphorylation of pantothenate (Pan), the first step in CoA biosynthesis. This Mycoplasma mobile (strain ATCC 43663 / 163K / NCTC 11711) (Mesomycoplasma mobile) protein is Type III pantothenate kinase.